Consider the following 168-residue polypeptide: Transcription antitermination protein NusB (168 aa).

This sequence belongs to the NusB family.

Involved in transcription antitermination. Required for transcription of ribosomal RNA (rRNA) genes. Binds specifically to the boxA antiterminator sequence of the ribosomal RNA (rrn) operons. The protein is Transcription antitermination protein NusB of Bradyrhizobium sp. (strain ORS 278).